The primary structure comprises 371 residues: UDP-N-acetylglucosamine--N-acetylmuramyl-(pentapeptide) pyrophosphoryl-undecaprenol N-acetylglucosamine transferase (371 aa).

Residues 15 to 17 (TGG), N126, R172, S199, I256, 275 to 280 (ALTVSE), and Q301 contribute to the UDP-N-acetyl-alpha-D-glucosamine site.

The protein belongs to the glycosyltransferase 28 family. MurG subfamily.

Its subcellular location is the cell inner membrane. It catalyses the reaction di-trans,octa-cis-undecaprenyl diphospho-N-acetyl-alpha-D-muramoyl-L-alanyl-D-glutamyl-meso-2,6-diaminopimeloyl-D-alanyl-D-alanine + UDP-N-acetyl-alpha-D-glucosamine = di-trans,octa-cis-undecaprenyl diphospho-[N-acetyl-alpha-D-glucosaminyl-(1-&gt;4)]-N-acetyl-alpha-D-muramoyl-L-alanyl-D-glutamyl-meso-2,6-diaminopimeloyl-D-alanyl-D-alanine + UDP + H(+). Its pathway is cell wall biogenesis; peptidoglycan biosynthesis. Functionally, cell wall formation. Catalyzes the transfer of a GlcNAc subunit on undecaprenyl-pyrophosphoryl-MurNAc-pentapeptide (lipid intermediate I) to form undecaprenyl-pyrophosphoryl-MurNAc-(pentapeptide)GlcNAc (lipid intermediate II). The sequence is that of UDP-N-acetylglucosamine--N-acetylmuramyl-(pentapeptide) pyrophosphoryl-undecaprenol N-acetylglucosamine transferase from Francisella tularensis subsp. tularensis (strain FSC 198).